The primary structure comprises 276 residues: GPN-loop GTPase 3 (276 aa).

13 to 18 is a GTP binding site; sequence SSGKST. A Gly-Pro-Asn (GPN)-loop; involved in dimer interface motif is present at residues 70–72; it reads GPN. 173-176 contributes to the GTP binding site; it reads SKMD. The segment at 257–276 is disordered; that stretch reads EDQEPKDPDRFEADDLEDDE. Residues 259–269 are compositionally biased toward basic and acidic residues; sequence QEPKDPDRFEA.

It belongs to the GPN-loop GTPase family. In terms of assembly, heterodimers with gpn1 or gpn2. Binds to RNA polymerase II (RNAPII).

It localises to the cytoplasm. The protein localises to the nucleus. Its function is as follows. Small GTPase required for proper nuclear import of RNA polymerase II and III (RNAPII and RNAPIII). May act at an RNAP assembly step prior to nuclear import. The chain is GPN-loop GTPase 3 from Schizosaccharomyces pombe (strain 972 / ATCC 24843) (Fission yeast).